The chain runs to 451 residues: Secreted RxLR effector protein 111 (451 aa).

The signal sequence occupies residues 1 to 19 (MRGTLATALLLVASCRIAA). The RxLR-dEER motif lies at 48 to 69 (RFLRDNREQRVALALTAANESR). An N-linked (GlcNAc...) asparagine glycan is attached at Asn-66. 2 stretches are compositionally biased toward polar residues: residues 175–184 (RKTLSKTQFK) and 413–426 (SPAS…QRTG). Disordered regions lie at residues 175 to 194 (RKTL…STKR) and 404 to 451 (IPLQ…NKHA). Basic and acidic residues predominate over residues 437 to 451 (PERDSFRHIESNKHA).

It belongs to the RxLR effector family.

The protein localises to the secreted. The protein resides in the host nucleus. Secreted effector that acts as an elicitor that induces cell death in host plant cells. This chain is Secreted RxLR effector protein 111, found in Plasmopara viticola (Downy mildew of grapevine).